A 405-amino-acid polypeptide reads, in one-letter code: Elongation factor Tu (405 aa).

A tr-type G domain is found at 10-215 (KPHVNVGTIG…AVDSYIPTPE (206 aa)). The interval 19–26 (GHVDHGKT) is G1. 19-26 (GHVDHGKT) lines the GTP pocket. Residue T26 participates in Mg(2+) binding. The G2 stretch occupies residues 61-65 (GITIN). Residues 82–85 (DCPG) form a G3 region. GTP contacts are provided by residues 82–86 (DCPGH) and 137–140 (NKVD). Residues 137–140 (NKVD) are G4. The tract at residues 175 to 177 (SAL) is G5.

It belongs to the TRAFAC class translation factor GTPase superfamily. Classic translation factor GTPase family. EF-Tu/EF-1A subfamily. In terms of assembly, monomer.

The protein resides in the cytoplasm. The catalysed reaction is GTP + H2O = GDP + phosphate + H(+). In terms of biological role, GTP hydrolase that promotes the GTP-dependent binding of aminoacyl-tRNA to the A-site of ribosomes during protein biosynthesis. The polypeptide is Elongation factor Tu (Deinonema sp).